The following is a 365-amino-acid chain: Peptide chain release factor 2 (365 aa).

The residue at position 252 (Gln-252) is an N5-methylglutamine.

It belongs to the prokaryotic/mitochondrial release factor family. In terms of processing, methylated by PrmC. Methylation increases the termination efficiency of RF2.

It localises to the cytoplasm. Peptide chain release factor 2 directs the termination of translation in response to the peptide chain termination codons UGA and UAA. The chain is Peptide chain release factor 2 from Colwellia psychrerythraea (strain 34H / ATCC BAA-681) (Vibrio psychroerythus).